Reading from the N-terminus, the 491-residue chain is Protein nucleotidyltransferase YdiU (491 aa).

Residues Gly94, Gly96, Arg97, Lys117, Asp129, Gly130, Arg180, and Arg187 each contribute to the ATP site. Asp256 serves as the catalytic Proton acceptor. Mg(2+) contacts are provided by Asn257 and Asp266. Residue Asp266 coordinates ATP.

The protein belongs to the SELO family. It depends on Mg(2+) as a cofactor. The cofactor is Mn(2+).

The catalysed reaction is L-seryl-[protein] + ATP = 3-O-(5'-adenylyl)-L-seryl-[protein] + diphosphate. It carries out the reaction L-threonyl-[protein] + ATP = 3-O-(5'-adenylyl)-L-threonyl-[protein] + diphosphate. The enzyme catalyses L-tyrosyl-[protein] + ATP = O-(5'-adenylyl)-L-tyrosyl-[protein] + diphosphate. It catalyses the reaction L-histidyl-[protein] + UTP = N(tele)-(5'-uridylyl)-L-histidyl-[protein] + diphosphate. The catalysed reaction is L-seryl-[protein] + UTP = O-(5'-uridylyl)-L-seryl-[protein] + diphosphate. It carries out the reaction L-tyrosyl-[protein] + UTP = O-(5'-uridylyl)-L-tyrosyl-[protein] + diphosphate. Functionally, nucleotidyltransferase involved in the post-translational modification of proteins. It can catalyze the addition of adenosine monophosphate (AMP) or uridine monophosphate (UMP) to a protein, resulting in modifications known as AMPylation and UMPylation. The chain is Protein nucleotidyltransferase YdiU from Clostridium botulinum (strain 657 / Type Ba4).